The sequence spans 140 residues: Small ribosomal subunit protein uS12m (140 aa).

The transit peptide at 1-30 (MNFLRQSFGITKQLASQAIQCSYETAVRGM) directs the protein to the mitochondrion.

Belongs to the universal ribosomal protein uS12 family.

The protein resides in the mitochondrion. The chain is Small ribosomal subunit protein uS12m (tko) from Drosophila melanogaster (Fruit fly).